The chain runs to 260 residues: MELQLTGKESGWWIVSHENKLWLPKGELPQGNAANWSLQGTTARQIGEWQGQSVWLIRQMMPSGMGSVRQLLDVDRGLFQLAGRGVQLAEFYRSHRFCGYCGHEMHASRTEWASLCNHCRERYYPQIAPCVIVAIRRGDEILLAQHVRHRGGINTVLAGFVEVGETLEQAVSREVLEESNIHIKNLRYVTSQPWPFPHSLMMAFMADYDSGELCHDPKELLNAGWYRYDQLPLLPPPGTVARRLIEDTVVLCREHSDLSQ.

Lysine 25 and arginine 69 together coordinate substrate. Cysteine 98 and cysteine 101 together coordinate Zn(2+). Residue glutamate 111 participates in substrate binding. 2 residues coordinate Zn(2+): cysteine 116 and cysteine 119. Residue tyrosine 124 participates in substrate binding. In terms of domain architecture, Nudix hydrolase spans 125–248 (PQIAPCVIVA…TVARRLIEDT (124 aa)). Alanine 158, glutamate 174, and glutamate 178 together coordinate a divalent metal cation. Residues 159-180 (GFVEVGETLEQAVSREVLEESN) carry the Nudix box motif. Position 192–199 (192–199 (QPWPFPHS)) interacts with substrate. Residue glutamate 219 coordinates a divalent metal cation. Alanine 241 provides a ligand contact to substrate.

This sequence belongs to the Nudix hydrolase family. NudC subfamily. Homodimer. Requires Mg(2+) as cofactor. Mn(2+) is required as a cofactor. The cofactor is Zn(2+).

It carries out the reaction a 5'-end NAD(+)-phospho-ribonucleoside in mRNA + H2O = a 5'-end phospho-adenosine-phospho-ribonucleoside in mRNA + beta-nicotinamide D-ribonucleotide + 2 H(+). The catalysed reaction is NAD(+) + H2O = beta-nicotinamide D-ribonucleotide + AMP + 2 H(+). The enzyme catalyses NADH + H2O = reduced beta-nicotinamide D-ribonucleotide + AMP + 2 H(+). In terms of biological role, mRNA decapping enzyme that specifically removes the nicotinamide adenine dinucleotide (NAD) cap from a subset of mRNAs by hydrolyzing the diphosphate linkage to produce nicotinamide mononucleotide (NMN) and 5' monophosphate mRNA. The NAD-cap is present at the 5'-end of some mRNAs and stabilizes RNA against 5'-processing. Has preference for mRNAs with a 5'-end purine. Catalyzes the hydrolysis of a broad range of dinucleotide pyrophosphates. This Yersinia pestis bv. Antiqua (strain Antiqua) protein is NAD-capped RNA hydrolase NudC.